We begin with the raw amino-acid sequence, 685 residues long: Mannan-binding lectin serine protease 2 (685 aa).

The N-terminal stretch at M1–G19 is a signal peptide. The CUB 1 domain occupies S20–E137. Ca(2+)-binding residues include E67 and D75. Residues C72 and C90 are joined by a disulfide bond. An N-linked (GlcNAc...) asparagine glycan is attached at N103. D120, S122, N123, D138, and V139 together coordinate Ca(2+). Residues D138–S181 form the EGF-like; calcium-binding domain. 4 disulfide bridges follow: C152-C165, C167-C180, C184-C211, and C241-C259. A (3R)-3-hydroxyasparagine modification is found at N158. 2 residues coordinate Ca(2+): Y159 and G162. Residues C184–T296 enclose the CUB 2 domain. N285 is a glycosylation site (N-linked (GlcNAc...) asparagine). Sushi domains follow at residues Q298–I363 and I364–P431. Disulfide bonds link C300/C348, C328/C361, C366/C411, C396/C429, C433/C551, C597/C617, and C628/C659. The Peptidase S1 domain occupies I444–N683. Residues H482 and D531 each act as charge relay system in the active site. S632 functions as the Charge relay system in the catalytic mechanism. N641 is a glycosylation site (N-linked (GlcNAc...) asparagine).

Belongs to the peptidase S1 family. Homodimer; disulfide-linked. Binds MBL2. Isoform 2 binds to MASP1. Binds SERPING1. In terms of processing, N-glycosylated. Post-translationally, the iron and 2-oxoglutarate dependent 3-hydroxylation of aspartate and asparagine is (R) stereospecific within EGF domains. Highly expressed in liver. Secreted in plasma.

The protein localises to the secreted. The enzyme catalyses Selective cleavage after Arg-223 in complement component C2 (-Ser-Leu-Gly-Arg-|-Lys-Ile-Gln-Ile) and after Arg-76 in complement component C4 (-Gly-Leu-Gln-Arg-|-Ala-Leu-Glu-Ile).. In terms of biological role, serum protease that plays an important role in the activation of the complement system via mannose-binding lectin. After activation by auto-catalytic cleavage it cleaves C2 and C4, leading to their activation and to the formation of C3 convertase. In Rattus norvegicus (Rat), this protein is Mannan-binding lectin serine protease 2 (Masp2).